Consider the following 369-residue polypeptide: Aminomethyltransferase (369 aa).

This sequence belongs to the GcvT family. As to quaternary structure, the glycine cleavage system is composed of four proteins: P, T, L and H.

It carries out the reaction N(6)-[(R)-S(8)-aminomethyldihydrolipoyl]-L-lysyl-[protein] + (6S)-5,6,7,8-tetrahydrofolate = N(6)-[(R)-dihydrolipoyl]-L-lysyl-[protein] + (6R)-5,10-methylene-5,6,7,8-tetrahydrofolate + NH4(+). Its function is as follows. The glycine cleavage system catalyzes the degradation of glycine. This is Aminomethyltransferase from Xanthomonas campestris pv. campestris (strain 8004).